Here is a 95-residue protein sequence, read N- to C-terminus: Small ribosomal subunit protein bS18 (95 aa).

Belongs to the bacterial ribosomal protein bS18 family. As to quaternary structure, part of the 30S ribosomal subunit. Forms a tight heterodimer with protein bS6.

Binds as a heterodimer with protein bS6 to the central domain of the 16S rRNA, where it helps stabilize the platform of the 30S subunit. This chain is Small ribosomal subunit protein bS18, found in Rickettsia prowazekii (strain Madrid E).